The chain runs to 210 residues: Proteasome subunit beta (210 aa).

A propeptide spans 1-7 (MEVLKTG) (removed in mature form; by autocatalysis). The active-site Nucleophile is the threonine 8.

The protein belongs to the peptidase T1B family. The 20S proteasome core is composed of 14 alpha and 14 beta subunits that assemble into four stacked heptameric rings, resulting in a barrel-shaped structure. The two inner rings, each composed of seven catalytic beta subunits, are sandwiched by two outer rings, each composed of seven alpha subunits. The catalytic chamber with the active sites is on the inside of the barrel. Has a gated structure, the ends of the cylinder being occluded by the N-termini of the alpha-subunits. Is capped at one or both ends by the proteasome regulatory ATPase, PAN.

The protein resides in the cytoplasm. It carries out the reaction Cleavage of peptide bonds with very broad specificity.. Its activity is regulated as follows. The formation of the proteasomal ATPase PAN-20S proteasome complex, via the docking of the C-termini of PAN into the intersubunit pockets in the alpha-rings, triggers opening of the gate for substrate entry. Interconversion between the open-gate and close-gate conformations leads to a dynamic regulation of the 20S proteasome proteolysis activity. Component of the proteasome core, a large protease complex with broad specificity involved in protein degradation. In Picrophilus torridus (strain ATCC 700027 / DSM 9790 / JCM 10055 / NBRC 100828 / KAW 2/3), this protein is Proteasome subunit beta.